We begin with the raw amino-acid sequence, 148 residues long: Putative pre-16S rRNA nuclease (148 aa).

Belongs to the YqgF nuclease family.

The protein localises to the cytoplasm. Functionally, could be a nuclease involved in processing of the 5'-end of pre-16S rRNA. The sequence is that of Putative pre-16S rRNA nuclease from Chlamydia trachomatis serovar L2 (strain ATCC VR-902B / DSM 19102 / 434/Bu).